A 317-amino-acid chain; its full sequence is Ribosomal RNA small subunit methyltransferase H (317 aa).

Residues 39 to 41 (GGH), Asp59, Phe83, Asp104, and Gln111 each bind S-adenosyl-L-methionine.

It belongs to the methyltransferase superfamily. RsmH family.

The protein localises to the cytoplasm. It carries out the reaction cytidine(1402) in 16S rRNA + S-adenosyl-L-methionine = N(4)-methylcytidine(1402) in 16S rRNA + S-adenosyl-L-homocysteine + H(+). In terms of biological role, specifically methylates the N4 position of cytidine in position 1402 (C1402) of 16S rRNA. In Paraburkholderia xenovorans (strain LB400), this protein is Ribosomal RNA small subunit methyltransferase H.